Consider the following 236-residue polypeptide: tRNA (guanine-N(7)-)-methyltransferase (236 aa).

Residues glutamate 43, aspartate 68, asparagine 102, and asparagine 125 each contribute to the S-adenosyl-L-methionine site. Residues lysine 129 and aspartate 161 each contribute to the substrate site.

Belongs to the class I-like SAM-binding methyltransferase superfamily. TrmB family.

The catalysed reaction is guanosine(46) in tRNA + S-adenosyl-L-methionine = N(7)-methylguanosine(46) in tRNA + S-adenosyl-L-homocysteine. Its pathway is tRNA modification; N(7)-methylguanine-tRNA biosynthesis. In terms of biological role, catalyzes the formation of N(7)-methylguanine at position 46 (m7G46) in tRNA. This Ruminiclostridium cellulolyticum (strain ATCC 35319 / DSM 5812 / JCM 6584 / H10) (Clostridium cellulolyticum) protein is tRNA (guanine-N(7)-)-methyltransferase.